The following is a 109-amino-acid chain: MSKGVEFNRLMLDMRAMQMDAMSAPKPVSGAQEAGASSFADMLGQAVNKVAQTQQASSQLANAFEIGKSGVDLTDVMISSQKASVSFQALTQVRNKLVQAYQDIMQMPV.

Belongs to the FliE family.

It is found in the bacterial flagellum basal body. This Pseudomonas savastanoi pv. phaseolicola (strain 1448A / Race 6) (Pseudomonas syringae pv. phaseolicola (strain 1448A / Race 6)) protein is Flagellar hook-basal body complex protein FliE.